The following is a 326-amino-acid chain: Putative ABC transporter ATP-binding protein MA_4020 (326 aa).

Polar residues predominate over residues 1–12 (MTISTLSSSYGN). Residues 1-34 (MTISTLSSSYGNAQDVPAEDSDRHGSIEPGSEKA) are disordered. An ABC transporter domain is found at 46 to 281 (LEVKNLCHRY…PELLRKAHLR (236 aa)). An ATP-binding site is contributed by 80–87 (GANGAGKS).

Belongs to the ABC transporter superfamily.

The protein resides in the cell membrane. Functionally, probably part of an ABC transporter complex. Responsible for energy coupling to the transport system. This is Putative ABC transporter ATP-binding protein MA_4020 from Methanosarcina acetivorans (strain ATCC 35395 / DSM 2834 / JCM 12185 / C2A).